Reading from the N-terminus, the 407-residue chain is MKFVDEVSIRVKAGDGGNGCMSFRREKFIENGGPNGGDGGDGGSIFMMADENLNTLVDYRYTRHFDAERGSNGGSTDCTGKKGEDLILRVPVGTTVIDSATQEVIGDLTKAGQKLMVVQGGWHGLGNTRFKSSTNRAPRQTTPGKPGEQRDLKLEMKVLADVGLLGLPNAGKSTFIRSVSAAKPKVADYPFTTLVPNLGVVSVDRWKSFVIADIPGLIEGASDGAGLGIRFLKHLARTRLLLHLVDMAPLDESSAPDAAEVIVNELIKFSPSLAERDRWLVLNKCDQILEEEHEARVKEIVDRLEWTGPVYVISAIAKEGTERLTRDIMRYLEDRADRLANDPAYKEELADLDQRIEDEARAQLQALDDKRALRRSGVKSVHDIGDDDWDEEDVDDEDGPEIIYVRD.

The region spanning 1–159 is the Obg domain; the sequence is MKFVDEVSIR…RDLKLEMKVL (159 aa). The segment at 128-148 is disordered; it reads TRFKSSTNRAPRQTTPGKPGE. A compositionally biased stretch (polar residues) spans 129 to 143; the sequence is RFKSSTNRAPRQTTP. The region spanning 160–333 is the OBG-type G domain; the sequence is ADVGLLGLPN…LTRDIMRYLE (174 aa). GTP contacts are provided by residues 166–173, 191–195, 213–216, 283–286, and 314–316; these read GLPNAGKS, FTTLV, DIPG, NKCD, and SAI. Residues S173 and T193 each contribute to the Mg(2+) site. A disordered region spans residues 376 to 407; the sequence is SGVKSVHDIGDDDWDEEDVDDEDGPEIIYVRD. Positions 385-400 are enriched in acidic residues; the sequence is GDDDWDEEDVDDEDGP.

This sequence belongs to the TRAFAC class OBG-HflX-like GTPase superfamily. OBG GTPase family. In terms of assembly, monomer. The cofactor is Mg(2+).

It localises to the cytoplasm. An essential GTPase which binds GTP, GDP and possibly (p)ppGpp with moderate affinity, with high nucleotide exchange rates and a fairly low GTP hydrolysis rate. Plays a role in control of the cell cycle, stress response, ribosome biogenesis and in those bacteria that undergo differentiation, in morphogenesis control. This is GTPase Obg from Pseudomonas fluorescens (strain Pf0-1).